Reading from the N-terminus, the 218-residue chain is Small ribosomal subunit protein uS3c (218 aa).

The KH type-2 domain occupies 43–118; it reads IKNYVQKNTK…KFNIAITKIA (76 aa).

The protein belongs to the universal ribosomal protein uS3 family. Part of the 30S ribosomal subunit.

The protein resides in the plastid. The protein localises to the chloroplast. This is Small ribosomal subunit protein uS3c (rps3) from Coffea arabica (Arabian coffee).